A 226-amino-acid polypeptide reads, in one-letter code: Large ribosomal subunit protein uL1 (226 aa).

Belongs to the universal ribosomal protein uL1 family. In terms of assembly, part of the 50S ribosomal subunit.

Functionally, binds directly to 23S rRNA. The L1 stalk is quite mobile in the ribosome, and is involved in E site tRNA release. In terms of biological role, protein L1 is also a translational repressor protein, it controls the translation of the L11 operon by binding to its mRNA. In Borreliella burgdorferi (strain ATCC 35210 / DSM 4680 / CIP 102532 / B31) (Borrelia burgdorferi), this protein is Large ribosomal subunit protein uL1.